Consider the following 415-residue polypeptide: Gamma-glutamyl phosphate reductase (415 aa).

Belongs to the gamma-glutamyl phosphate reductase family.

Its subcellular location is the cytoplasm. The catalysed reaction is L-glutamate 5-semialdehyde + phosphate + NADP(+) = L-glutamyl 5-phosphate + NADPH + H(+). It participates in amino-acid biosynthesis; L-proline biosynthesis; L-glutamate 5-semialdehyde from L-glutamate: step 2/2. In terms of biological role, catalyzes the NADPH-dependent reduction of L-glutamate 5-phosphate into L-glutamate 5-semialdehyde and phosphate. The product spontaneously undergoes cyclization to form 1-pyrroline-5-carboxylate. This chain is Gamma-glutamyl phosphate reductase, found in Lachnospira eligens (strain ATCC 27750 / DSM 3376 / VPI C15-48 / C15-B4) (Eubacterium eligens).